The chain runs to 208 residues: Large ribosomal subunit protein uL4 (208 aa).

The disordered stretch occupies residues 44–79 (QRQGTHKSKERSEISGSTRKLGRQKGGGGARRGDIN).

The protein belongs to the universal ribosomal protein uL4 family. Part of the 50S ribosomal subunit.

One of the primary rRNA binding proteins, this protein initially binds near the 5'-end of the 23S rRNA. It is important during the early stages of 50S assembly. It makes multiple contacts with different domains of the 23S rRNA in the assembled 50S subunit and ribosome. In terms of biological role, forms part of the polypeptide exit tunnel. In Phocaeicola vulgatus (strain ATCC 8482 / DSM 1447 / JCM 5826 / CCUG 4940 / NBRC 14291 / NCTC 11154) (Bacteroides vulgatus), this protein is Large ribosomal subunit protein uL4.